We begin with the raw amino-acid sequence, 889 residues long: Alanine--tRNA ligase (889 aa).

Positions 564, 568, 671, and 675 each coordinate Zn(2+).

It belongs to the class-II aminoacyl-tRNA synthetase family. Zn(2+) is required as a cofactor.

The protein resides in the cytoplasm. It catalyses the reaction tRNA(Ala) + L-alanine + ATP = L-alanyl-tRNA(Ala) + AMP + diphosphate. Catalyzes the attachment of alanine to tRNA(Ala) in a two-step reaction: alanine is first activated by ATP to form Ala-AMP and then transferred to the acceptor end of tRNA(Ala). Also edits incorrectly charged Ser-tRNA(Ala) and Gly-tRNA(Ala) via its editing domain. In Pelagibacter ubique (strain HTCC1062), this protein is Alanine--tRNA ligase.